A 736-amino-acid polypeptide reads, in one-letter code: Gephyrin (736 aa).

The segment at 14–153 (QIRVGVLTVS…LPGSKKGSQE (140 aa)) is MPT Mo-transferase. 2 disordered regions span residues 181-232 (DELE…DSSS) and 260-290 (TASL…PKVQ). Over residues 187-199 (PSPPPPLSPPPTT) the composition is skewed to pro residues. The span at 261-290 (ASLSTTPSESPRAQATSRLSTASCPTPKVQ) shows a compositional bias: polar residues. The segment at 294-736 (SSKENILRAS…VVDVMVIGRL (443 aa)) is MPT adenylyltransferase.

In the N-terminal section; belongs to the MoaB/Mog family. It in the C-terminal section; belongs to the MoeA family. In terms of assembly, homotrimer, homodimer and homooligomer. Interacts with glycine receptors. Requires Mg(2+) as cofactor.

It is found in the postsynaptic cell membrane. The protein resides in the cell membrane. The protein localises to the cytoplasm. Its subcellular location is the cytosol. It localises to the cytoskeleton. It is found in the cell projection. The protein resides in the dendrite. The protein localises to the postsynaptic density. It carries out the reaction molybdopterin + ATP + H(+) = adenylyl-molybdopterin + diphosphate. It catalyses the reaction adenylyl-molybdopterin + molybdate = Mo-molybdopterin + AMP + H(+). Its pathway is cofactor biosynthesis; molybdopterin biosynthesis. Microtubule-associated protein involved in membrane protein-cytoskeleton interactions. It is thought to anchor the inhibitory glycine receptor (GLYR) to subsynaptic microtubules. Acts as a major instructive molecule at inhibitory synapses, where it also clusters GABA type A receptors. Functionally, also has a catalytic activity and catalyzes two steps in the biosynthesis of the molybdenum cofactor. In the first step, molybdopterin is adenylated. Subsequently, molybdate is inserted into adenylated molybdopterin and AMP is released. This is Gephyrin (GPHN) from Gallus gallus (Chicken).